A 274-amino-acid polypeptide reads, in one-letter code: Cytochrome c oxidase subunit 3 (274 aa).

The Cytoplasmic portion of the chain corresponds to 2–15 (AHVKNHDYQILPPS). The helical transmembrane segment at 16–36 (IWPFFGAIGAFVMLTGAVAWM) threads the bilayer. Topologically, residues 37–48 (KGITFFGLPVEG) are periplasmic. Residues 49–77 (PWMFLIGLVGVLYVMFGWWADVVNEGETG) traverse the membrane as a helical segment. Topologically, residues 78–79 (EH) are cytoplasmic. The helical transmembrane segment at 80–115 (TPVVRIGLQYGFILFIMSEVMFFVAWFWAFIKNALY) threads the bilayer. Residues 116-139 (PMGPDSPIKDGVWPPEGIVTFDPW) are Periplasmic-facing. A helical transmembrane segment spans residues 140–166 (HLPLINTLILLLSGVAVTWAHHAFVLE). At 167–168 (GD) the chain is on the cytoplasmic side. The helical transmembrane segment at 169–197 (RKTTINGLIVAVILGVCFTGLQAYEYSHA) threads the bilayer. The Periplasmic portion of the chain corresponds to 198–203 (AFGLAD). Residues 204-237 (TVYAGAFYMATGFHGAHVIIGTIFLFVCLIRLLK) traverse the membrane as a helical segment. Residues 238 to 244 (GQMTQKQ) lie on the Cytoplasmic side of the membrane. Residues 245 to 274 (HVGFEAAAWYWHFVDVVWLFLFVVIYIWGR) traverse the membrane as a helical segment.

Belongs to the cytochrome c oxidase subunit 3 family.

The protein localises to the cell inner membrane. It catalyses the reaction 4 Fe(II)-[cytochrome c] + O2 + 8 H(+)(in) = 4 Fe(III)-[cytochrome c] + 2 H2O + 4 H(+)(out). This is Cytochrome c oxidase subunit 3 (ctaE) from Paracoccus denitrificans.